Consider the following 680-residue polypeptide: Probable Xaa-Pro aminopeptidase P (680 aa).

Residues Asp477, Asp488, Glu586, and Glu600 each contribute to the Mn(2+) site.

It belongs to the peptidase M24B family. It depends on Mn(2+) as a cofactor.

It catalyses the reaction Release of any N-terminal amino acid, including proline, that is linked to proline, even from a dipeptide or tripeptide.. Functionally, catalyzes the removal of a penultimate prolyl residue from the N-termini of peptides. The protein is Probable Xaa-Pro aminopeptidase P (AMPP) of Podospora anserina (strain S / ATCC MYA-4624 / DSM 980 / FGSC 10383) (Pleurage anserina).